A 464-amino-acid polypeptide reads, in one-letter code: uncharacterized protein (464 aa).

In terms of domain architecture, TRAM spans 13–71 (MLKVSDIIQIKIDKIVFGGEGLGYYNGFAVFVPMSIPEDELEIEIISIKKTYARGLIKN). S-adenosyl-L-methionine-binding residues include Q295, Y324, E345, and D393. The active-site Nucleophile is C420.

This sequence belongs to the class I-like SAM-binding methyltransferase superfamily. RNA M5U methyltransferase family.

This is an uncharacterized protein from Fusobacterium nucleatum subsp. nucleatum (strain ATCC 25586 / DSM 15643 / BCRC 10681 / CIP 101130 / JCM 8532 / KCTC 2640 / LMG 13131 / VPI 4355).